The following is a 591-amino-acid chain: Aspartate--tRNA ligase (591 aa).

Position 171 (glutamate 171) interacts with L-aspartate. An aspartate region spans residues 195 to 198; that stretch reads QLFK. Arginine 217 contacts L-aspartate. ATP contacts are provided by residues 217–219 and glutamine 226; that span reads RDE. Histidine 448 serves as a coordination point for L-aspartate. Glutamate 482 provides a ligand contact to ATP. Position 489 (arginine 489) interacts with L-aspartate. 534 to 537 serves as a coordination point for ATP; the sequence is GLDR.

The protein belongs to the class-II aminoacyl-tRNA synthetase family. Type 1 subfamily. In terms of assembly, homodimer.

Its subcellular location is the cytoplasm. It catalyses the reaction tRNA(Asp) + L-aspartate + ATP = L-aspartyl-tRNA(Asp) + AMP + diphosphate. Functionally, catalyzes the attachment of L-aspartate to tRNA(Asp) in a two-step reaction: L-aspartate is first activated by ATP to form Asp-AMP and then transferred to the acceptor end of tRNA(Asp). The polypeptide is Aspartate--tRNA ligase (Aliivibrio fischeri (strain MJ11) (Vibrio fischeri)).